A 212-amino-acid chain; its full sequence is FMN-dependent NADH:quinone oxidoreductase 1 (212 aa).

FMN contacts are provided by residues Ser-10, 16-18 (SHS), 97-100 (MYNF), and 145-148 (SRGG).

The protein belongs to the azoreductase type 1 family. In terms of assembly, homodimer. Requires FMN as cofactor.

The catalysed reaction is 2 a quinone + NADH + H(+) = 2 a 1,4-benzosemiquinone + NAD(+). The enzyme catalyses N,N-dimethyl-1,4-phenylenediamine + anthranilate + 2 NAD(+) = 2-(4-dimethylaminophenyl)diazenylbenzoate + 2 NADH + 2 H(+). Its function is as follows. Quinone reductase that provides resistance to thiol-specific stress caused by electrophilic quinones. In terms of biological role, also exhibits azoreductase activity. Catalyzes the reductive cleavage of the azo bond in aromatic azo compounds to the corresponding amines. This chain is FMN-dependent NADH:quinone oxidoreductase 1, found in Pseudomonas fluorescens (strain Pf0-1).